A 276-amino-acid chain; its full sequence is Merozoite surface protein 2 (276 aa).

A signal peptide spans 1–20 (MKVIKTLSIINFFIFVTFNI). Residues Asn22 and Asn36 are each glycosylated (N-linked (GlcNAc...) asparagine). The segment at 44–202 (AESNPSTGAG…EQTESPELQS (159 aa)) is polymorphic region. Residues 44 to 242 (AESNPSTGAG…CTDGNKENCG (199 aa)) are disordered. The span at 51–90 (GAGGSGSAGGSGSAGGSGSAGGSGSAGGSGSAGSGDGNGA) shows a compositional bias: gly residues. 5 repeat units span residues 53-58 (GGSGSA), 59-64 (GGSGSA), 65-70 (GGSGSA), 71-76 (GGSGSA), and 77-82 (GGSGSA). Residues 53–82 (GGSGSAGGSGSAGGSGSAGGSGSAGGSGSA) form a 5 X 6 AA tandem repeats of G-G-S-G-S-A region. The span at 91 to 127 (NPGADAERSPSTPATTTTTTTTNDAEASTSTSSENPN) shows a compositional bias: low complexity. Composition is skewed to polar residues over residues 143–169 (KPNQ…NVPP), 176–187 (KSPTAQPEQAEN), and 194–204 (QTESPELQSAP). Asn153 is a glycosylation site (N-linked (GlcNAc...) asparagine). N-linked (GlcNAc...) asparagine glycosylation is present at Asn225. Residues 229–238 (SQKECTDGNK) are compositionally biased toward basic and acidic residues. Residues Cys233 and Cys241 are joined by a disulfide bond. An N-linked (GlcNAc...) asparagine glycan is attached at Asn250. Asn250 carries GPI-anchor amidated asparagine lipidation. Residues 251–276 (SSNIASINKFVVLISATLVLSFAIFI) constitute a propeptide, removed in mature form.

The protein resides in the cell membrane. In terms of biological role, may play a role in the merozoite attachment to the erythrocyte. This Plasmodium falciparum (isolate 7G8) protein is Merozoite surface protein 2.